A 296-amino-acid polypeptide reads, in one-letter code: MSITSIRALLRSAVSLARTKPLRFTNLKDIKLRPPIPPTVENFQVSPDHPLWQFFPEGNQTTNAIREQDDLDHDSREWTSAELRQKSFEDLHRLWYIILKERNILAREVRLAESIGMRDVKQFNNIDYKLIKSLRRIKQVLLERHIAFERSQASPSVQEEKNEYLEEFSERYLNAEGKEIEEMDEKLDRLQYAFFGIEPTMDIETLQDDIDVNFIKGMEYSSNLKAQKYNKLNPESELELPLRGPMEELPFLLFDVEDAVQQVKELRESGQSRELYKIETIPFLSKAIKSHLEGQE.

The transit peptide at 1–19 (MSITSIRALLRSAVSLART) directs the protein to the mitochondrion.

It belongs to the universal ribosomal protein uL29 family. As to quaternary structure, component of the mitochondrial large ribosomal subunit. Mature mitochondrial ribosomes consist of a small (37S) and a large (54S) subunit. The 37S subunit contains at least 33 different proteins and 1 molecule of RNA (15S). The 54S subunit contains at least 45 different proteins and 1 molecule of RNA (21S).

It localises to the mitochondrion. This chain is Large ribosomal subunit protein uL29m (MRPL4), found in Lodderomyces elongisporus (strain ATCC 11503 / CBS 2605 / JCM 1781 / NBRC 1676 / NRRL YB-4239) (Yeast).